A 306-amino-acid chain; its full sequence is F-box/LRR-repeat protein At3g26922 (306 aa).

Residues 13–73 (EDRISDLPEA…QSEDETYSEI (61 aa)) form the F-box domain. LRR repeat units follow at residues 67–93 (DETY…HLGF), 98–122 (CRSV…VLHV), 138–170 (CETL…RLEN), 171–196 (VDYK…VVYR), 215–243 (LTIY…KIDG), and 263–288 (IMNV…SLAL).

The sequence is that of F-box/LRR-repeat protein At3g26922 from Arabidopsis thaliana (Mouse-ear cress).